Reading from the N-terminus, the 514-residue chain is 1,25-dihydroxyvitamin D(3) 24-hydroxylase, mitochondrial (514 aa).

The transit peptide at 1–35 (MSCPIDKRRTLIAFLRRLRDLGQPPRSVTSKASAS) directs the protein to the mitochondrion. Cys462 is a heme binding site.

This sequence belongs to the cytochrome P450 family. Heme serves as cofactor.

Its subcellular location is the mitochondrion. The enzyme catalyses calcitriol + 2 reduced [adrenodoxin] + O2 + 2 H(+) = calcitetrol + 2 oxidized [adrenodoxin] + H2O. It carries out the reaction calcitetrol + 2 reduced [adrenodoxin] + O2 + 2 H(+) = (1S)-1,25-dihydroxy-24-oxocalciol + 2 oxidized [adrenodoxin] + 2 H2O. The catalysed reaction is (1S)-1,25-dihydroxy-24-oxocalciol + 2 reduced [adrenodoxin] + O2 + 2 H(+) = (1S)-1,23,25-trihydroxy-24-oxocalciol + 2 oxidized [adrenodoxin] + H2O. It catalyses the reaction (1S)-1,23-dihydroxy-24,25,26,27-tetranorcalciol + 2 reduced [adrenodoxin] + O2 + 2 H(+) = (1S)-1-hydroxy-23-oxo-24,25,26,27-tetranorcalciol + 2 oxidized [adrenodoxin] + 2 H2O. The enzyme catalyses (1S)-1-hydroxy-23-oxo-24,25,26,27-tetranorcalciol + 2 reduced [adrenodoxin] + O2 + H(+) = calcitroate + 2 oxidized [adrenodoxin] + H2O. It carries out the reaction calcidiol + 2 reduced [adrenodoxin] + O2 + 2 H(+) = secalciferol + 2 oxidized [adrenodoxin] + H2O. The catalysed reaction is secalciferol + 2 reduced [adrenodoxin] + O2 + 2 H(+) = 25-hydroxy-24-oxocalciol + 2 oxidized [adrenodoxin] + 2 H2O. It catalyses the reaction 25-hydroxy-24-oxocalciol + 2 reduced [adrenodoxin] + O2 + 2 H(+) = 23S,25-dihydroxy-24-oxocholecalciferol + 2 oxidized [adrenodoxin] + H2O. The enzyme catalyses 20S,23-dihydroxycholecalciferol + 2 reduced [adrenodoxin] + O2 + 2 H(+) = 20S,23,25-trihydroxycholecalciferol + 2 oxidized [adrenodoxin] + H2O. It carries out the reaction 20S,23-dihydroxycholecalciferol + 2 reduced [adrenodoxin] + O2 + 2 H(+) = 20S,23,24-trihydroxycholecalciferol + 2 oxidized [adrenodoxin] + H2O. The catalysed reaction is 20S-hydroxycholecalciferol + 2 reduced [adrenodoxin] + O2 + 2 H(+) = 20S,25-dihydroxycholecalciferol + 2 oxidized [adrenodoxin] + H2O. It catalyses the reaction 20S-hydroxycholecalciferol + 2 reduced [adrenodoxin] + O2 + 2 H(+) = 20S,24S-dihydroxycholecalciferol + 2 oxidized [adrenodoxin] + H2O. The enzyme catalyses 20S-hydroxycholecalciferol + 2 reduced [adrenodoxin] + O2 + 2 H(+) = 20S,24R-dihydroxycholecalciferol + 2 oxidized [adrenodoxin] + H2O. Its function is as follows. A cytochrome P450 monooxygenase with a key role in vitamin D catabolism and calcium homeostasis. Via C24-oxidation pathway, catalyzes the inactivation of both the vitamin D precursor calcidiol (25-hydroxyvitamin D(3)) and the active hormone calcitriol (1-alpha,25-dihydroxyvitamin D(3)). With initial hydroxylation at C-24 (via C24-oxidation pathway), performs a sequential 6-step oxidation of calcitriol leading to the formation of the biliary metabolite calcitroic acid. Hydroxylates at C-24 or C-25 other vitamin D active metabolites, such as CYP11A1-derived secosteroids 20S-hydroxycholecalciferol and 20S,23-dihydroxycholecalciferol. Mechanistically, uses molecular oxygen inserting one oxygen atom into a substrate, and reducing the second into a water molecule, with two electrons provided by NADPH via FDXR/adrenodoxin reductase and FDX1/adrenodoxin. This Rattus norvegicus (Rat) protein is 1,25-dihydroxyvitamin D(3) 24-hydroxylase, mitochondrial (Cyp24a1).